We begin with the raw amino-acid sequence, 509 residues long: Cytochrome P450 4X1 (509 aa).

A helical transmembrane segment spans residues 14 to 34; the sequence is FYLAFVFCLALGLLQAIKLYL. Heme is bound at residue C454.

It belongs to the cytochrome P450 family. It depends on heme as a cofactor. In terms of tissue distribution, expressed in brain, heart, kidney and skin and, at lower levels, in skeletal muscle and liver. In the brain, high levels are detected in amygdala and lower levels in globus pallidus and cerebellum. In the heart, very high levels in aorta, but very low levels in other heart regions. Also expressed in breast, prostate and colon.

It localises to the endoplasmic reticulum membrane. It is found in the microsome membrane. It catalyses the reaction N-(5Z,8Z,11Z,14Z-eicosatetraenoyl)-ethanolamine + reduced [NADPH--hemoprotein reductase] + O2 = N-(14,15-epoxy-5Z,8Z,11Z-eicosatrienoyl)-ethanolamine + oxidized [NADPH--hemoprotein reductase] + H2O + H(+). A cytochrome P450 monooxygenase that selectively catalyzes the epoxidation of the last double bond of the arachidonoyl moiety of anandamide, potentially modulating endocannabinoid signaling. Has no hydroxylase activity toward various fatty acids, steroids and prostaglandins. Mechanistically, uses molecular oxygen inserting one oxygen atom into a substrate, and reducing the second into a water molecule, with two electrons provided by NADPH via cytochrome P450 reductase (CPR; NADPH-ferrihemoprotein reductase). This chain is Cytochrome P450 4X1, found in Homo sapiens (Human).